Here is a 419-residue protein sequence, read N- to C-terminus: UDP-N-acetylglucosamine 1-carboxyvinyltransferase (419 aa).

Position 22-23 (22-23 (KN)) interacts with phosphoenolpyruvate. Residue R91 coordinates UDP-N-acetyl-alpha-D-glucosamine. C115 (proton donor) is an active-site residue. At C115 the chain carries 2-(S-cysteinyl)pyruvic acid O-phosphothioketal. UDP-N-acetyl-alpha-D-glucosamine contacts are provided by residues 120–124 (RPVDL), 160–163 (KVSV), D305, and I327.

Belongs to the EPSP synthase family. MurA subfamily.

It localises to the cytoplasm. It carries out the reaction phosphoenolpyruvate + UDP-N-acetyl-alpha-D-glucosamine = UDP-N-acetyl-3-O-(1-carboxyvinyl)-alpha-D-glucosamine + phosphate. It functions in the pathway cell wall biogenesis; peptidoglycan biosynthesis. Cell wall formation. Adds enolpyruvyl to UDP-N-acetylglucosamine. The polypeptide is UDP-N-acetylglucosamine 1-carboxyvinyltransferase (Klebsiella pneumoniae (strain 342)).